A 213-amino-acid polypeptide reads, in one-letter code: Dimethylamine corrinoid protein 3 (213 aa).

The B12-binding N-terminal domain occupies Met1–Leu91. The B12-binding domain occupies Gly92–Leu213. His104 provides a ligand contact to methylcob(III)alamin.

The protein belongs to the methylamine corrinoid protein family.

It participates in one-carbon metabolism; methanogenesis from dimethylamine. Functionally, acts as a methyl group carrier between MtbB and MtbA. This chain is Dimethylamine corrinoid protein 3 (mtbC3), found in Methanosarcina acetivorans (strain ATCC 35395 / DSM 2834 / JCM 12185 / C2A).